A 277-amino-acid chain; its full sequence is Shikimate dehydrogenase (NADP(+)) (277 aa).

Residues 15 to 17 (SLS) and T62 contribute to the shikimate site. The active-site Proton acceptor is the K66. Residues N87 and D102 each coordinate shikimate. NADP(+) is bound by residues 127–131 (GSGGA), 151–156 (NRTVDK), and I219. Y221 serves as a coordination point for shikimate. Position 242 (G242) interacts with NADP(+).

This sequence belongs to the shikimate dehydrogenase family. Homodimer.

The enzyme catalyses shikimate + NADP(+) = 3-dehydroshikimate + NADPH + H(+). It participates in metabolic intermediate biosynthesis; chorismate biosynthesis; chorismate from D-erythrose 4-phosphate and phosphoenolpyruvate: step 4/7. In terms of biological role, involved in the biosynthesis of the chorismate, which leads to the biosynthesis of aromatic amino acids. Catalyzes the reversible NADPH linked reduction of 3-dehydroshikimate (DHSA) to yield shikimate (SA). The sequence is that of Shikimate dehydrogenase (NADP(+)) from Bacillus cereus (strain B4264).